Consider the following 216-residue polypeptide: uncharacterized protein (216 aa).

A 4Fe-4S ferredoxin-type domain is found at 18-47; that stretch reads PPDSPIEDRCGSCNICVDSCPTGALVQGGQ. 7 residues coordinate [4Fe-4S] cluster: Cys27, Cys30, Cys33, Cys37, Cys79, Cys82, and Cys86.

This is an uncharacterized protein from Geobacillus stearothermophilus (Bacillus stearothermophilus).